The following is a 352-amino-acid chain: Putative squamosa promoter-binding-like protein 19 (352 aa).

A disordered region spans residues 68 to 88 (AAAPATRRARGGSGGGGGGGG). Gly residues predominate over residues 78–88 (GGSGGGGGGGG). An SBP-type zinc finger spans residues 90–167 (AEACSVDGCR…DGHNRRRRKP (78 aa)). Zn(2+) contacts are provided by Cys93, Cys98, Cys115, His118, Cys134, Cys137, His141, and Cys153. Positions 150-166 (KKSCRKRLDGHNRRRRK) match the Bipartite nuclear localization signal motif. Positions 152–174 (SCRKRLDGHNRRRRKPQHDALNP) are disordered.

The protein resides in the nucleus. In terms of biological role, trans-acting factor that binds specifically to the consensus nucleotide sequence 5'-TNCGTACAA-3'. This Oryza sativa subsp. japonica (Rice) protein is Putative squamosa promoter-binding-like protein 19 (SPL19).